The following is a 221-amino-acid chain: Telomere repeats-binding bouquet formation protein 2 (221 aa).

Belongs to the TERB2 family. Component of the MAJIN-TERB1-TERB2 complex, composed of MAJIN, TERB1 and TERB2.

Its subcellular location is the chromosome. It localises to the telomere. The protein localises to the nucleus inner membrane. Functionally, meiosis-specific telomere-associated protein involved in meiotic telomere attachment to the nucleus inner membrane, a crucial step for homologous pairing and synapsis. Component of the MAJIN-TERB1-TERB2 complex, which promotes telomere cap exchange by mediating attachment of telomeric DNA to the inner nuclear membrane and replacement of the protective cap of telomeric chromosomes: in early meiosis, the MAJIN-TERB1-TERB2 complex associates with telomeric DNA and the shelterin/telosome complex. During prophase, the complex matures and promotes release of the shelterin/telosome complex from telomeric DNA. This chain is Telomere repeats-binding bouquet formation protein 2, found in Bos taurus (Bovine).